Reading from the N-terminus, the 1069-residue chain is Receptor-type guanylate cyclase gcy-29 (1069 aa).

Residues 1–23 (MLPNFWNFQFIFVIFCWIPIVVS) form the signal peptide. The Extracellular segment spans residues 24–458 (DEKIVLKIGS…FREENCDYTQ (435 aa)). N-linked (GlcNAc...) asparagine glycans are attached at residues asparagine 161, asparagine 240, and asparagine 407. A helical transmembrane segment spans residues 459–479 (TIVIATAVVCIILTVFLGIWL). Over 480-1069 (RRACETSALD…FKKKNNTFDF (590 aa)) the chain is Cytoplasmic. Residues 497–806 (RDDVQILDEE…RVRLATEIAL (310 aa)) enclose the Protein kinase domain. ATP-binding positions include 503–511 (LDEEQVKSV) and lysine 527. Residues 876–1006 (TVMFSDIVGF…ETVNIAAVME (131 aa)) enclose the Guanylate cyclase domain. The Mg(2+) site is built by aspartate 881, isoleucine 882, and aspartate 925.

It belongs to the adenylyl cyclase class-4/guanylyl cyclase family. In terms of tissue distribution, expressed bilaterally in ASE and AFD sensory neurons.

It is found in the cell membrane. The enzyme catalyses GTP = 3',5'-cyclic GMP + diphosphate. In terms of biological role, guanylate cyclase involved in the production of the second messenger cGMP. This is Receptor-type guanylate cyclase gcy-29 from Caenorhabditis elegans.